A 491-amino-acid polypeptide reads, in one-letter code: Anhydromuropeptide permease (491 aa).

The Cytoplasmic segment spans residues 1–11; sequence MSSQYLRIFQQ. A helical membrane pass occupies residues 12 to 32; the sequence is PRSAILLILGFASGLPLALTS. At 33–47 the chain is on the periplasmic side; that stretch reads GTLQAWMTVENIDLK. Residues 48-61 traverse the membrane as a helical segment; sequence TIGFFSLVGQAYVF. Topologically, residues 62 to 81 are cytoplasmic; sequence KFLWSPLMDRYTPPFFGRRR. The chain crosses the membrane as a helical span at residues 82–105; sequence GWLLATQILLLVAIAAMGFLEPGT. Gln106 is a topological domain (periplasmic). A helical membrane pass occupies residues 107 to 124; that stretch reads LRWMAALAVVIAFCSASQ. The Cytoplasmic portion of the chain corresponds to 125–221; the sequence is DIVFDAWKTD…VAPLRDFFGR (97 aa). A helical membrane pass occupies residues 222 to 240; sequence NNAWLILLLIVLYKLGDAF. Over 241–264 the chain is Periplasmic; it reads AMSLTTTFLIRGVGFDAGEVGVVN. A helical membrane pass occupies residues 265 to 284; that stretch reads KTLGLLATIVGALYGGILMQ. Over 285-287 the chain is Cytoplasmic; it reads RLS. A helical membrane pass occupies residues 288-303; sequence LFRALLIFGILQGASN. At 304 to 327 the chain is on the periplasmic side; it reads AGYWLLSITDKHLYSMGAAVFFEN. The helical transmembrane segment at 328-346 threads the bilayer; that stretch reads LCGGMGTSAFVALLMTLCN. Topologically, residues 347-421 are cytoplasmic; the sequence is KSFSATQFAL…NDNFISRTAY (75 aa). Residues 422–453 form a helical membrane-spanning segment; that stretch reads PAGYAFAMWTLAAGVSLLAVWLLLLTMDALDL. Residues 454-457 are Periplasmic-facing; sequence THFS. A helical membrane pass occupies residues 458–485; it reads FLPALLEVGVLVALSGVVLGGLLDYLAL. Topologically, residues 486–491 are cytoplasmic; the sequence is RKTHLT.

This sequence belongs to the major facilitator superfamily.

Its subcellular location is the cell inner membrane. In terms of biological role, permease involved in cell wall peptidoglycan recycling. Transports, from the periplasm into the cytoplasm, the disaccharide N-acetylglucosaminyl-beta-1,4-anhydro-N-acetylmuramic acid (GlcNAc-anhMurNAc) and GlcNAc-anhMurNAc-peptides. Transport is dependent on the proton motive force. The polypeptide is Anhydromuropeptide permease (ampG) (Escherichia coli O157:H7).